The sequence spans 201 residues: Inosine triphosphate pyrophosphatase (201 aa).

Threonine 16–lysine 21 contributes to the ITP binding site. Glutamate 44 serves as a coordination point for Mg(2+). ITP is bound by residues lysine 56, aspartate 72 to threonine 73, lysine 89, phenylalanine 148 to aspartate 151, lysine 171, and histidine 176 to arginine 177.

Belongs to the HAM1 NTPase family. In terms of assembly, homodimer. Mg(2+) serves as cofactor. Mn(2+) is required as a cofactor.

The protein localises to the cytoplasm. It carries out the reaction ITP + H2O = IMP + diphosphate + H(+). The catalysed reaction is dITP + H2O = dIMP + diphosphate + H(+). It catalyses the reaction XTP + H2O = XMP + diphosphate + H(+). In terms of biological role, pyrophosphatase that hydrolyzes non-canonical purine nucleotides such as inosine triphosphate (ITP), deoxyinosine triphosphate (dITP) or xanthosine 5'-triphosphate (XTP) to their respective monophosphate derivatives. The enzyme does not distinguish between the deoxy- and ribose forms. Probably excludes non-canonical purines from RNA and DNA precursor pools, thus preventing their incorporation into RNA and DNA and avoiding chromosomal lesions. The sequence is that of Inosine triphosphate pyrophosphatase from Zea mays (Maize).